Consider the following 154-residue polypeptide: Metallothiol transferase FosB (154 aa).

The region spanning 8 to 123 (GINHLLFSVS…DGHKFELHTG (116 aa)) is the VOC domain. Residues His11, His70, and Glu119 each contribute to the Mg(2+) site. Glu119 acts as the Proton donor/acceptor in catalysis.

This sequence belongs to the fosfomycin resistance protein family. FosB subfamily. As to quaternary structure, homodimer. Mg(2+) is required as a cofactor.

The protein resides in the cytoplasm. Metallothiol transferase which confers resistance to fosfomycin by catalyzing the addition of a thiol cofactor to fosfomycin. L-cysteine is probably the physiological thiol donor. The chain is Metallothiol transferase FosB from Bacillus licheniformis (strain ATCC 14580 / DSM 13 / JCM 2505 / CCUG 7422 / NBRC 12200 / NCIMB 9375 / NCTC 10341 / NRRL NRS-1264 / Gibson 46).